Reading from the N-terminus, the 102-residue chain is uncharacterized protein (102 aa).

Transmembrane regions (helical) follow at residues 24–44 (AFIVPSAIFFFVFYFSLPVLT) and 55–75 (IGAVSWAWLFAIAQFAMTWIL).

The protein resides in the cell membrane. This is an uncharacterized protein from Bacillus subtilis (strain 168).